Reading from the N-terminus, the 100-residue chain is Large ribosomal subunit protein bL21 (100 aa).

This sequence belongs to the bacterial ribosomal protein bL21 family. Part of the 50S ribosomal subunit. Contacts protein L20.

In terms of biological role, this protein binds to 23S rRNA in the presence of protein L20. In Mycoplasmopsis synoviae (strain 53) (Mycoplasma synoviae), this protein is Large ribosomal subunit protein bL21.